The sequence spans 395 residues: MSATSSSGDVKKFQAVPKPTSNASPPPASSGFNARTLWPDLIETPENQWVFECKDIIEKIGTNGPIAVEIKKNMEKCLMYFYTLKKKLNLFDHTYTASCILFYRYWFIYGIPTAITECIHISQGILVTACKTMENNRPIEAYIKATCEFLMQNIPSLKSRTNIDKLKWEFRDKLVTNEKKILCLFGFDLNISNPKELIEEVFSGYYRFNRDHNLPENFKKAFPKILQESRNFMVQAVTQPVSLLCDGYTFIVLSLIYCGLEYKKLVDKDFRYPKNFFKDRFPIEVTPENFANIFTDYKLLEENFFNLKSNKGAKLQIDSSMIDSVIDESGDVENEVSEISDPFNYELIKSGEVKEEFLNHIETRVKDLLDKAKQESMKRKAKDPIRTPDAKKPKI.

2 disordered regions span residues 1-31 and 372-395; these read MSATSSSGDVKKFQAVPKPTSNASPPPASSG and AKQESMKRKAKDPIRTPDAKKPKI. S24 carries the post-translational modification Phosphoserine.

In terms of assembly, belongs to the BUR kinase complex composed of SGV1/BUR1 and BUR2. Interacts with SGV1.

The protein resides in the nucleus. Functionally, component of the BUR kinase complex involved in transcription regulation. This complex phosphorylates 'Ser-120' of the UBC2/RAD6 ubiquitin-conjugating enzyme (E2), leading to monoubiquitination of histone H2B, the localization of the PAF1 complex to the chromatin, and the silencing of telomeric-associated genes. Also required for histone H3 'Lys-4' trimethylation. May phosphorylate the 'Ser-5' of the RBP1 carboxy-terminal domain (CTD) repeats. Necessary for the recovery from pheromone-induced growth arrest in the cell cycle G1 phase. Also required for vegetative growth itself. The kinase activity of the complex requires the presence of BUR2. Overexpression of BUR2 interferes with mitotic chromosome segregation. The protein is Protein BUR2 (BUR2) of Saccharomyces cerevisiae (strain ATCC 204508 / S288c) (Baker's yeast).